A 1508-amino-acid polypeptide reads, in one-letter code: Calponin homology domain-containing protein DDB_G0272472 (1508 aa).

Disordered stretches follow at residues 1–165 (MFRN…KNDF), 197–290 (DSEE…NLSP), 309–518 (DFKS…TSIV), 531–561 (AANA…LFND), 680–706 (KEKQ…EKEL), and 1036–1391 (KIEK…KKSA). Over residues 81–107 (SSSPSTSTTTTTKSSSTTTTTTTSSSS) the composition is skewed to low complexity. Residues 208–222 (PIKKKQSNDLEKNIF) are compositionally biased toward basic and acidic residues. Composition is skewed to low complexity over residues 234 to 251 (KQST…QKQP), 263 to 290 (FGDS…NLSP), and 315 to 332 (SNNT…KSKP). 2 stretches are compositionally biased toward basic and acidic residues: residues 337 to 346 (QKEEIKEVST) and 362 to 371 (VDEKPKERST). Positions 380 to 391 (KTVTVKSNNSFE) are enriched in polar residues. Low complexity predominate over residues 395-438 (FGSTTTNDDGGDNDFSFTPATTPSSSSSTKATTTSPSSTTTTKS). A compositionally biased stretch (polar residues) spans 439 to 452 (NINIGQKSNKSVDQ). Positions 455-498 (QFLNDIFQQEEQDKKRREEEAKLKQQQKQKEKEQIKDEIDDLFK) form a coiled coil. Residues 465-498 (EQDKKRREEEAKLKQQQKQKEKEQIKDEIDDLFK) show a composition bias toward basic and acidic residues. Low complexity-rich tracts occupy residues 500 to 516 (SKPT…STTS) and 531 to 557 (AANA…KSTN). Residues 1036-1164 (KIEKEKEERD…DQEEKEKQLK (129 aa)) show a composition bias toward basic and acidic residues. Composition is skewed to low complexity over residues 1165-1181 (EQQQ…TTTT) and 1189-1206 (DSDA…SSHS). The segment covering 1216–1225 (SKAKGRKKPT) has biased composition (basic residues). Basic and acidic residues predominate over residues 1226–1235 (RRELTKDGNR). Residues 1333–1355 (PTVTQTTTTTTTPPTTPPSSSVQ) are compositionally biased toward low complexity. The segment covering 1362–1374 (RSFSGSSFMGINS) has biased composition (polar residues). Residues 1397 to 1504 (MKALDVLLQW…YLSEFFKVMK (108 aa)) enclose the Calponin-homology (CH) domain.

The chain is Calponin homology domain-containing protein DDB_G0272472 from Dictyostelium discoideum (Social amoeba).